A 153-amino-acid chain; its full sequence is Ribosome maturation factor RimP (153 aa).

It belongs to the RimP family.

The protein localises to the cytoplasm. Required for maturation of 30S ribosomal subunits. This Rippkaea orientalis (strain PCC 8801 / RF-1) (Cyanothece sp. (strain PCC 8801)) protein is Ribosome maturation factor RimP.